Consider the following 162-residue polypeptide: Small ribosomal subunit protein uS9 (162 aa).

It belongs to the universal ribosomal protein uS9 family.

In Parvibaculum lavamentivorans (strain DS-1 / DSM 13023 / NCIMB 13966), this protein is Small ribosomal subunit protein uS9.